A 422-amino-acid chain; its full sequence is Tyrosine--tRNA ligase (422 aa).

Y35 serves as a coordination point for L-tyrosine. A 'HIGH' region motif is present at residues 40-49 (PTADSLHIGH). L-tyrosine contacts are provided by Y170 and Q174. A 'KMSKS' region motif is present at residues 232 to 236 (KFGKT). K235 is a binding site for ATP. In terms of domain architecture, S4 RNA-binding spans 355–421 (LTLVDLLVES…GKKKYFLVTY (67 aa)).

This sequence belongs to the class-I aminoacyl-tRNA synthetase family. TyrS type 1 subfamily. In terms of assembly, homodimer.

It is found in the cytoplasm. It carries out the reaction tRNA(Tyr) + L-tyrosine + ATP = L-tyrosyl-tRNA(Tyr) + AMP + diphosphate + H(+). Its function is as follows. Catalyzes the attachment of tyrosine to tRNA(Tyr) in a two-step reaction: tyrosine is first activated by ATP to form Tyr-AMP and then transferred to the acceptor end of tRNA(Tyr). This Bacillus pumilus (strain SAFR-032) protein is Tyrosine--tRNA ligase.